The chain runs to 218 residues: uncharacterized protein (218 aa).

A run of 2 helical transmembrane segments spans residues 8 to 28 and 158 to 178; these read LAVF…ATAG and ILFY…FLLI.

It localises to the cell membrane. This is an uncharacterized protein from Mycoplasma genitalium (strain ATCC 33530 / DSM 19775 / NCTC 10195 / G37) (Mycoplasmoides genitalium).